Consider the following 186-residue polypeptide: Peptidoglycan-recognition protein SD (186 aa).

Residues 1 to 18 form the signal peptide; the sequence is MTWIGLLIVGLTAIAVQG. One can recognise an N-acetylmuramoyl-L-alanine amidase domain in the interval 47 to 169; the sequence is AVIAHTAGGA…RQVSATKSPG (123 aa). Cysteine 57 and cysteine 63 form a disulfide bridge. Asparagine 181 carries N-linked (GlcNAc...) asparagine glycosylation.

It belongs to the N-acetylmuramoyl-L-alanine amidase 2 family. In terms of tissue distribution, in larvae, it is mainly expressed in fat body. Also expressed in uninduced hemocytes and mbn-2 cells.

Its subcellular location is the secreted. Functionally, peptidoglycan-recognition protein that plays a key role in innate immunity by binding to peptidoglycans (PGN) of Gram-positive bacteria and activating the Toll pathway. Has no activity against on Gram-negative bacteria and fungi. Shows some partial redundancy with PRPGP-SA in Gram-positive bacteria recognition. May act by activating the proteolytic cleavage of Spatzle and the subsequent activation of Toll pathway. Recognizes S.aureus PGN. This Drosophila melanogaster (Fruit fly) protein is Peptidoglycan-recognition protein SD (PGRP-SD).